The sequence spans 160 residues: Twist-related protein 2 (160 aa).

The tract at residues 1–63 (MEEGSSSPVS…GSPSAQSFEE (63 aa)) is disordered. Residues 27–37 (KRFGRKRRYSK) are compositionally biased toward basic residues. One can recognise a bHLH domain in the interval 66-117 (SQRILANVRERQRTQSLNEAFAALRKIIPTLPSDKLSKIQTLKLAARYIDFL).

In terms of assembly, efficient DNA binding requires dimerization with another bHLH protein. Forms a heterodimer with TCF3/E12. Also interacts with MEF2C. As to expression, in the embryo, highly expressed in chondrogenic cells. In embryonic skin, expressed in the undifferentiated mesenchymal layer beneath the epidermis which later develops into the dermis. Expressed in early myeloid cells but not in lymphoid cells in the liver. Expression also detected in the secretory ependymal epithelium of the choroid plexus primordium. In the adult, expressed in secreting glandular tissues and tubules.

The protein resides in the nucleus. The protein localises to the cytoplasm. Functionally, binds to the E-box consensus sequence 5'-CANNTG-3' as a heterodimer and inhibits transcriptional activation by MYOD1, MYOG, MEF2A and MEF2C. Also represses expression of pro-inflammatory cytokines such as TNFA and IL1B. Involved in postnatal glycogen storage and energy metabolism. Inhibits the premature or ectopic differentiation of preosteoblast cells during osteogenesis, possibly by changing the internal signal transduction response of osteoblasts to external growth factors. The chain is Twist-related protein 2 (TWIST2) from Homo sapiens (Human).